We begin with the raw amino-acid sequence, 355 residues long: N-acetyl-gamma-glutamyl-phosphate reductase (355 aa).

Residue cysteine 152 is part of the active site.

The protein belongs to the NAGSA dehydrogenase family. Type 1 subfamily.

It is found in the cytoplasm. It carries out the reaction N-acetyl-L-glutamate 5-semialdehyde + phosphate + NADP(+) = N-acetyl-L-glutamyl 5-phosphate + NADPH + H(+). It functions in the pathway amino-acid biosynthesis; L-arginine biosynthesis; N(2)-acetyl-L-ornithine from L-glutamate: step 3/4. In terms of biological role, catalyzes the NADPH-dependent reduction of N-acetyl-5-glutamyl phosphate to yield N-acetyl-L-glutamate 5-semialdehyde. The sequence is that of N-acetyl-gamma-glutamyl-phosphate reductase from Psychrobacter arcticus (strain DSM 17307 / VKM B-2377 / 273-4).